A 210-amino-acid polypeptide reads, in one-letter code: MRPRLWLLLAAQLTVLHGNSVLQQTPAYIKVQTNKMVMLSCEAKISLSNMCIYWLRQRQAPSSDSHHEFLTLWDSAKGTIHGEEVEQEKIAVFRDASRFILNLTSVKPEDSGIYFCMIVGSPELTFGKGTQLSVVDFLPTTAQPTKKSTLKKRVCRLPRPETQKGPLCSPVTLGLLVAGVLVLLVSLGVAMHLCCRRRRARLRFMKQFYK.

Residues M1–G18 form the signal peptide. One can recognise an Ig-like V-type domain in the interval N19–L132. At N19–P170 the chain is on the extracellular side. A disulfide bridge connects residues C41 and C116. N-linked (GlcNAc...) asparagine glycosylation is present at N102. A helical membrane pass occupies residues V171–M191. At H192–K210 the chain is on the cytoplasmic side.

As to quaternary structure, in general heterodimer of an alpha and a beta chain linked by two disulfide bonds.

It is found in the cell membrane. Its function is as follows. Identifies cytotoxic/suppressor T-cells that interact with MHC class I bearing targets. CD8 is thought to play a role in the process of T-cell mediated killing. The sequence is that of T-cell surface glycoprotein CD8 beta-2 chain from Homo sapiens (Human).